Reading from the N-terminus, the 242-residue chain is Sugar fermentation stimulation protein homolog (242 aa).

This sequence belongs to the SfsA family.

This chain is Sugar fermentation stimulation protein homolog, found in Nitratidesulfovibrio vulgaris (strain DP4) (Desulfovibrio vulgaris).